Consider the following 725-residue polypeptide: Catalase-peroxidase (725 aa).

The tryptophyl-tyrosyl-methioninium (Trp-Tyr) (with M-239) cross-link spans 90-213 (WHSAGTYRTG…LAAVQMGLIY (124 aa)). H91 serves as the catalytic Proton acceptor. The tryptophyl-tyrosyl-methioninium (Tyr-Met) (with W-90) cross-link spans 213 to 239 (YVNPEGPNGNPDPVAAAKDIRETFARM). H254 contributes to the heme b binding site.

It belongs to the peroxidase family. Peroxidase/catalase subfamily. In terms of assembly, homodimer or homotetramer. Heme b is required as a cofactor. Post-translationally, formation of the three residue Trp-Tyr-Met cross-link is important for the catalase, but not the peroxidase activity of the enzyme.

It catalyses the reaction H2O2 + AH2 = A + 2 H2O. It carries out the reaction 2 H2O2 = O2 + 2 H2O. Its function is as follows. Bifunctional enzyme with both catalase and broad-spectrum peroxidase activity. The sequence is that of Catalase-peroxidase from Hahella chejuensis (strain KCTC 2396).